We begin with the raw amino-acid sequence, 878 residues long: Probable receptor-like protein kinase At4g39110 (878 aa).

Residues 1–43 (MEIRKKPNIFTVLVIDFSSKPSMALLLAILLFLSGPSASAVAA) form the signal peptide. Over 44–440 (AAVGPATGFK…GRTTGMGKHG (397 aa)) the chain is Extracellular. N-linked (GlcNAc...) asparagine glycosylation is found at Asn-170, Asn-183, Asn-254, Asn-317, and Asn-382. Residues 441–461 (MVATAGFVMMFGAFIGLGAMV) form a helical membrane-spanning segment. Residues 462-878 (YKWKKRPQDW…FTQFANLNGR (417 aa)) lie on the Cytoplasmic side of the membrane. The Protein kinase domain maps to 526 to 798 (FEASQIIGVG…GDVLWNLEYA (273 aa)). ATP is bound by residues 532 to 540 (IGVGGFGNV) and Lys-554. The active-site Proton acceptor is the Asp-650. The interval 808–844 (GKAEETENAKPDVVTPGSVPVSDPSPITPSVTTNEAA) is disordered.

Belongs to the protein kinase superfamily. Ser/Thr protein kinase family.

Its subcellular location is the membrane. The sequence is that of Probable receptor-like protein kinase At4g39110 from Arabidopsis thaliana (Mouse-ear cress).